Consider the following 91-residue polypeptide: Large ribosomal subunit protein bL27 (91 aa).

The segment at 1 to 22 is disordered; the sequence is MAHKKGQGSSRNGRDSNPQYRG. Over residues 7–19 the composition is skewed to polar residues; the sequence is QGSSRNGRDSNPQ.

This sequence belongs to the bacterial ribosomal protein bL27 family.

The sequence is that of Large ribosomal subunit protein bL27 from Myxococcus xanthus (strain DK1622).